Consider the following 295-residue polypeptide: ATP synthase gamma chain (295 aa).

It belongs to the ATPase gamma chain family. In terms of assembly, F-type ATPases have 2 components, CF(1) - the catalytic core - and CF(0) - the membrane proton channel. CF(1) has five subunits: alpha(3), beta(3), gamma(1), delta(1), epsilon(1). CF(0) has three main subunits: a, b and c.

It is found in the cell inner membrane. Produces ATP from ADP in the presence of a proton gradient across the membrane. The gamma chain is believed to be important in regulating ATPase activity and the flow of protons through the CF(0) complex. The chain is ATP synthase gamma chain from Sulfurimonas denitrificans (strain ATCC 33889 / DSM 1251) (Thiomicrospira denitrificans (strain ATCC 33889 / DSM 1251)).